The following is a 1592-amino-acid chain: Autophagy-related protein 2 (1592 aa).

Positions 2–21 (AFWLPQNIQKRLLLYVLQQI) are ER-targeting domain. Phosphoserine is present on Ser-236. Ser-249 is modified (phosphoserine; by ATG1). The segment at 264–286 (AMEEQSNEDPSEPQVTQEEQEND) is disordered. Residues 1049-1075 (TRKFIANTVEKLDKELSKAEASSSKSN) adopt a coiled-coil conformation. Ser-1086 is subject to Phosphoserine; by ATG1. Positions 1347 to 1373 (APVRSFMAIGSGVKTLVTVLMSEYRQE) are PAS-targeting domain.

Belongs to the ATG2 family. In terms of assembly, interacts with ATG18. Interacts with ATG9.

It is found in the preautophagosomal structure membrane. The protein localises to the endoplasmic reticulum membrane. It catalyses the reaction a 1,2-diacyl-sn-glycero-3-phosphocholine(in) = a 1,2-diacyl-sn-glycero-3-phosphocholine(out). It carries out the reaction a 1,2-diacyl-sn-glycero-3-phospho-L-serine(in) = a 1,2-diacyl-sn-glycero-3-phospho-L-serine(out). The catalysed reaction is a 1,2-diacyl-sn-glycero-3-phosphoethanolamine(in) = a 1,2-diacyl-sn-glycero-3-phosphoethanolamine(out). In terms of biological role, lipid transfer protein required for autophagosome completion and peroxisome degradation. Tethers the edge of the isolation membrane (IM) to the endoplasmic reticulum (ER) and mediates direct lipid transfer from ER to IM for IM expansion. ATG2 binds to the ER exit site (ERES), which is the membrane source for autophagosome formation, using basic residues in its N-terminal region (NR) and to the expanding edge of the IM through its C-terminal region. The latter binding is assisted by an ATG18-PtdIns3P interaction. ATG2 then extracts phospholipids from the membrane source using its NR and transfers them to ATG9 to the IM through its predicted beta-sheet-rich structure for membrane expansion. ATG2 is also involved in the recruitment of lipids to a restricted region close to the vacuole, termed the vacuole-isolation membrane contact site (VICS), which is also essential for autophagosome formation. Necessary for the localization of ATG18 to the preautophagosomal structure (PAS) and the binding of ATG18 to ATG9. ATG2 is the most downstream ATG protein in the preautophagosomal structure organization process. Involved in correct ATG9 trafficking through the preautophagosomal structure and in peroxisome degradation. Plays a significant role in life span extension. The protein is Autophagy-related protein 2 (ATG2) of Saccharomyces cerevisiae (strain ATCC 204508 / S288c) (Baker's yeast).